The chain runs to 391 residues: Acetate kinase (391 aa).

N7 is a binding site for Mg(2+). K14 is an ATP binding site. R88 lines the substrate pocket. The active-site Proton donor/acceptor is D145. Residues 203-207 (HAGNG), 278-280 (DAR), and 326-330 (GMGEN) each bind ATP. Position 378 (E378) interacts with Mg(2+).

Belongs to the acetokinase family. As to quaternary structure, homodimer. Requires Mg(2+) as cofactor. It depends on Mn(2+) as a cofactor.

It localises to the cytoplasm. The catalysed reaction is acetate + ATP = acetyl phosphate + ADP. The protein operates within metabolic intermediate biosynthesis; acetyl-CoA biosynthesis; acetyl-CoA from acetate: step 1/2. Its function is as follows. Catalyzes the formation of acetyl phosphate from acetate and ATP. Can also catalyze the reverse reaction. In Phytoplasma mali (strain AT), this protein is Acetate kinase.